Consider the following 111-residue polypeptide: Beta-microseminoprotein (111 aa).

The signal sequence occupies residues 1–20; it reads MKFLLGTLVVLATFVTLCNS. Q21 carries the post-translational modification Pyrrolidone carboxylic acid. 5 disulfide bridges follow: C22-C67, C35-C59, C54-C90, C57-C66, and C81-C104.

Belongs to the beta-microseminoprotein family. In terms of assembly, homodimer; Interacts with PI16. Corpora lutea, mostly in the luteal cells surrounding blood vessels.

Its subcellular location is the secreted. This Sus scrofa (Pig) protein is Beta-microseminoprotein (MSMB).